The sequence spans 638 residues: LIM domain kinase 2 (638 aa).

LIM zinc-binding domains are found at residues 12–63 (CRGC…CHKD) and 72–124 (CHGC…CGKC). The 88-residue stretch at 152 to 239 (LISMPATTEC…TLQLLIEHDP (88 aa)) folds into the PDZ domain. Thr-210 is subject to Phosphothreonine. The disordered stretch occupies residues 255-304 (PHMQSTGHTLMLSTLDTKENQEGTLRRRSLRRSNSISKSPGPSSPKEPLL). The span at 257–269 (MQSTGHTLMLSTL) shows a compositional bias: polar residues. Residues 270 to 279 (DTKENQEGTL) are compositionally biased toward basic and acidic residues. The segment covering 286 to 304 (RSNSISKSPGPSSPKEPLL) has biased composition (low complexity). Phosphoserine occurs at positions 293 and 298. In terms of domain architecture, Protein kinase spans 331–608 (LIHGEVLGKG…DSFEALSLFL (278 aa)). Residues 337–345 (LGKGFFGQA) and Lys-360 contribute to the ATP site. Asp-451 is an active-site residue. Thr-505 bears the Phosphothreonine; by ROCK1 and CDC42BP mark.

It belongs to the protein kinase superfamily. TKL Ser/Thr protein kinase family. In terms of assembly, binds ROCK1 and MARF1. Interacts with NISCH. In terms of processing, phosphorylated on serine and/or threonine residues by ROCK1. As to expression, specifically expressed in the testes.

It is found in the cytoplasm. It localises to the cytoskeleton. The protein localises to the spindle. Its subcellular location is the microtubule organizing center. The protein resides in the centrosome. It is found in the nucleus. It localises to the perinuclear region. The catalysed reaction is L-seryl-[protein] + ATP = O-phospho-L-seryl-[protein] + ADP + H(+). The enzyme catalyses L-threonyl-[protein] + ATP = O-phospho-L-threonyl-[protein] + ADP + H(+). Serine/threonine-protein kinase that plays an essential role in the regulation of actin filament dynamics. Acts downstream of several Rho family GTPase signal transduction pathways. Involved in astral microtubule organization and mitotic spindle orientation during early stages of mitosis by mediating phosphorylation of TPPP. Displays serine/threonine-specific phosphorylation of myelin basic protein and histone (MBP) in vitro. Suppresses ciliogenesis via multiple pathways; phosphorylation of CFL1, suppression of directional trafficking of ciliary vesicles to the ciliary base, and by facilitating YAP1 nuclear localization where it acts as a transcriptional corepressor of the TEAD4 target genes AURKA and PLK1. This is LIM domain kinase 2 (Limk2) from Mus musculus (Mouse).